We begin with the raw amino-acid sequence, 186 residues long: MAETSSLISGVAQRYAGSLFELALDAKSVAAVEKDLDRFEALLSGSEDLKRLISSPVFSSEDQLHAIGALADKAGIKGLVGNFLRVVARNRRLFALPGIIAAFRKIAAEHRGEVSADVISAHELSAAQQNELKATLKGVAGKDVTINVTVDPSILGGLIVKMGSRQIDTSLRTKLSSLKLALKEVG.

It belongs to the ATPase delta chain family. In terms of assembly, F-type ATPases have 2 components, F(1) - the catalytic core - and F(0) - the membrane proton channel. F(1) has five subunits: alpha(3), beta(3), gamma(1), delta(1), epsilon(1). F(0) has three main subunits: a(1), b(2) and c(10-14). The alpha and beta chains form an alternating ring which encloses part of the gamma chain. F(1) is attached to F(0) by a central stalk formed by the gamma and epsilon chains, while a peripheral stalk is formed by the delta and b chains.

It is found in the cell inner membrane. In terms of biological role, f(1)F(0) ATP synthase produces ATP from ADP in the presence of a proton or sodium gradient. F-type ATPases consist of two structural domains, F(1) containing the extramembraneous catalytic core and F(0) containing the membrane proton channel, linked together by a central stalk and a peripheral stalk. During catalysis, ATP synthesis in the catalytic domain of F(1) is coupled via a rotary mechanism of the central stalk subunits to proton translocation. This protein is part of the stalk that links CF(0) to CF(1). It either transmits conformational changes from CF(0) to CF(1) or is implicated in proton conduction. The polypeptide is ATP synthase subunit delta (Brucella anthropi (strain ATCC 49188 / DSM 6882 / CCUG 24695 / JCM 21032 / LMG 3331 / NBRC 15819 / NCTC 12168 / Alc 37) (Ochrobactrum anthropi)).